A 526-amino-acid polypeptide reads, in one-letter code: Microphthalmia-associated transcription factor (526 aa).

A Phosphoserine; by MTOR modification is found at Ser-5. Disordered regions lie at residues 20–54 and 155–179; these read EPKTYYELKSQPLKSSSSAEHSGASKPPLSSSTMT and VLSSPCPNQPGDHAMPPVPGSSAPN. Low complexity predominate over residues 34-44; the sequence is SSSSAEHSGAS. Phosphoserine; by MAPK is present on Ser-180. The transactivation stretch occupies residues 224–291; sequence DDVIDDIISL…PANLPNIKRE (68 aa). Phosphoserine is present on Ser-280. A Glycyl lysine isopeptide (Lys-Gly) (interchain with G-Cter in SUMO) cross-link involves residue Lys-289. One can recognise a bHLH domain in the interval 311-364; the sequence is QKKDNHNLIERRRRFNINDRIKELGTLIPKSNDPDMRWNKGTILKASVDYIRKL. Positions 355–401 form a coiled coil; sequence KASVDYIRKLQREQQRAKDLENRQKKLEHANRHLLLRVQELEMQARA. The tract at residues 374–395 is leucine-zipper; it reads LENRQKKLEHANRHLLLRVQEL. Residues 401–431 are DNA-binding regulation; the sequence is AHGLSLIPSTGLCSPDLVNRIIKQEPVLENC. A Phosphoserine; by GSK3 modification is found at Ser-405. Ser-414 is modified (phosphoserine). Lys-423 participates in a covalent cross-link: Glycyl lysine isopeptide (Lys-Gly) (interchain with G-Cter in SUMO). A Phosphoserine modification is found at Ser-491. The interval 496 to 526 is disordered; that stretch reads TDPLLSSVSPGASKTSSRRSSMSAEETEHAC. Residues 507 to 519 are compositionally biased toward low complexity; it reads ASKTSSRRSSMSA. Ser-516 is modified (phosphoserine; by RPS6KA1).

It belongs to the MiT/TFE family. As to quaternary structure, homodimer or heterodimer; dimerization is mediated via the coiled coil region. Efficient DNA binding requires dimerization with another bHLH protein. Binds DNA in the form of homodimer or heterodimer with either TFE3, TFEB or TFEC. Interacts with small GTPases Rag (RagA/RRAGA, RagB/RRAGB, RagC/RRAGC and/or RagD/RRAGD); promoting its recruitment to lysosomal membrane in the presence of nutrients. Interacts with KARS1. Identified in a complex with HINT1 and CTNNB1. Interacts with VSX2. Post-translationally, when nutrients are present, phosphorylation by MTOR at Ser-5 via non-canonical mTORC1 pathway promotes ubiquitination by the SCF(BTRC) complex, followed by degradation. Phosphorylation at Ser-405 significantly enhances the ability to bind the tyrosinase promoter. Phosphorylation by MARK3/cTAK1 at Ser-280 promotes association with 14-3-3/YWHA adapters and retention in the cytosol. Phosphorylated at Ser-180 and Ser-516 following KIT signaling, triggering a short live activation: Phosphorylation at Ser-180 and Ser-516 by MAPK and RPS6KA1, respectively, activate the transcription factor activity but also promote ubiquitination and subsequent degradation by the proteasome. Phosphorylated in response to blue light (415nm). Ubiquitinated by the SCF(BTRC) and SCF(FBXW11) complexes following phosphorylation ar Ser-5 by MTOR, leading to its degradation by the proteasome. Ubiquitinated following phosphorylation at Ser-180, leading to subsequent degradation by the proteasome. Deubiquitinated by USP13, preventing its degradation. In terms of tissue distribution, in the adult, expressed at high levels in the heart, skin, skeletal muscle, intestine, stomach, kidney, ovary, lung, spleen and brain. In the embryo, expressed in developing eye, ear, skin and heart. Isoform M is expressed in melanocytes and also in the embryonic and adult heart while isoform A and isoform H are more widely expressed.

The protein resides in the nucleus. It localises to the cytoplasm. The protein localises to the lysosome membrane. Functionally, transcription factor that acts as a master regulator of melanocyte survival and differentiation as well as melanosome biogenesis. Binds to M-boxes (5'-TCATGTG-3') and symmetrical DNA sequences (E-boxes) (5'-CACGTG-3') found in the promoter of pigmentation genes, such as tyrosinase (TYR). Involved in the cellular response to amino acid availability by acting downstream of MTOR: in the presence of nutrients, MITF phosphorylation by MTOR promotes its inactivation. Upon starvation or lysosomal stress, inhibition of MTOR induces MITF dephosphorylation, resulting in transcription factor activity. Plays an important role in melanocyte development by regulating the expression of tyrosinase (TYR) and tyrosinase-related protein 1 (TYRP1). Plays a critical role in the differentiation of various cell types, such as neural crest-derived melanocytes, mast cells, osteoclasts and optic cup-derived retinal pigment epithelium. This chain is Microphthalmia-associated transcription factor (Mitf), found in Mus musculus (Mouse).